The primary structure comprises 349 residues: Phenylalanine--tRNA ligase alpha subunit (349 aa).

Residue Glu-258 coordinates Mg(2+).

Belongs to the class-II aminoacyl-tRNA synthetase family. Phe-tRNA synthetase alpha subunit type 1 subfamily. As to quaternary structure, tetramer of two alpha and two beta subunits. Mg(2+) is required as a cofactor.

It is found in the cytoplasm. It carries out the reaction tRNA(Phe) + L-phenylalanine + ATP = L-phenylalanyl-tRNA(Phe) + AMP + diphosphate + H(+). This chain is Phenylalanine--tRNA ligase alpha subunit, found in Rickettsia bellii (strain RML369-C).